Reading from the N-terminus, the 482-residue chain is uncharacterized protein (482 aa).

2 stretches are compositionally biased toward low complexity: residues 24 to 86 (SPNS…AQQQ) and 312 to 339 (TDSL…SQSI). Disordered regions lie at residues 24–88 (SPNS…QQHY) and 307–376 (LHSQ…LIGK). Residues 342 to 363 (EEEEDGGEDEEEEGGEDNDNES) show a composition bias toward acidic residues.

This is an uncharacterized protein from Dictyostelium discoideum (Social amoeba).